We begin with the raw amino-acid sequence, 244 residues long: tRNA (guanine-N(7)-)-methyltransferase (244 aa).

S-adenosyl-L-methionine is bound by residues glutamate 75, glutamate 100, aspartate 127, and aspartate 150. Aspartate 150 is an active-site residue. Residues lysine 154, aspartate 186, and 223–226 (TRFE) contribute to the substrate site.

The protein belongs to the class I-like SAM-binding methyltransferase superfamily. TrmB family.

The catalysed reaction is guanosine(46) in tRNA + S-adenosyl-L-methionine = N(7)-methylguanosine(46) in tRNA + S-adenosyl-L-homocysteine. It functions in the pathway tRNA modification; N(7)-methylguanine-tRNA biosynthesis. Its function is as follows. Catalyzes the formation of N(7)-methylguanine at position 46 (m7G46) in tRNA. The polypeptide is tRNA (guanine-N(7)-)-methyltransferase (Xylella fastidiosa (strain M12)).